A 526-amino-acid polypeptide reads, in one-letter code: Sterol 14-alpha demethylase CYP51A (526 aa).

The chain crosses the membrane as a helical span at residues 27 to 47 (IGFAVFLVLSVVLNVLNQLLF). Tyrosine 123 provides a ligand contact to lanosterol. A heme-binding site is contributed by cysteine 470.

The protein belongs to the cytochrome P450 family. It depends on heme as a cofactor.

The protein resides in the endoplasmic reticulum membrane. The enzyme catalyses a 14alpha-methyl steroid + 3 reduced [NADPH--hemoprotein reductase] + 3 O2 = a Delta(14) steroid + formate + 3 oxidized [NADPH--hemoprotein reductase] + 4 H2O + 4 H(+). It carries out the reaction a 14alpha-methyl steroid + reduced [NADPH--hemoprotein reductase] + O2 = a 14alpha-hydroxymethyl steroid + oxidized [NADPH--hemoprotein reductase] + H2O + H(+). The catalysed reaction is a 14alpha-hydroxymethyl steroid + reduced [NADPH--hemoprotein reductase] + O2 = a 14alpha-formyl steroid + oxidized [NADPH--hemoprotein reductase] + 2 H2O + H(+). It catalyses the reaction a 14alpha-formyl steroid + reduced [NADPH--hemoprotein reductase] + O2 = a Delta(14) steroid + formate + oxidized [NADPH--hemoprotein reductase] + H2O + 2 H(+). The enzyme catalyses lanosterol + 3 reduced [NADPH--hemoprotein reductase] + 3 O2 = 4,4-dimethyl-5alpha-cholesta-8,14,24-trien-3beta-ol + formate + 3 oxidized [NADPH--hemoprotein reductase] + 4 H2O + 4 H(+). It carries out the reaction lanosterol + reduced [NADPH--hemoprotein reductase] + O2 = 32-hydroxylanosterol + oxidized [NADPH--hemoprotein reductase] + H2O + H(+). The catalysed reaction is 32-hydroxylanosterol + reduced [NADPH--hemoprotein reductase] + O2 = 32-oxolanosterol + oxidized [NADPH--hemoprotein reductase] + 2 H2O + H(+). It catalyses the reaction 32-oxolanosterol + reduced [NADPH--hemoprotein reductase] + O2 = 4,4-dimethyl-5alpha-cholesta-8,14,24-trien-3beta-ol + formate + oxidized [NADPH--hemoprotein reductase] + H2O + 2 H(+). The enzyme catalyses eburicol + 3 reduced [NADPH--hemoprotein reductase] + 3 O2 = 14-demethyleburicol + formate + 3 oxidized [NADPH--hemoprotein reductase] + 4 H2O + 4 H(+). It carries out the reaction eburicol + reduced [NADPH--hemoprotein reductase] + O2 = 32-hydroxyeburicol + oxidized [NADPH--hemoprotein reductase] + H2O + H(+). The catalysed reaction is 32-hydroxyeburicol + reduced [NADPH--hemoprotein reductase] + O2 = 32-oxoeburicol + oxidized [NADPH--hemoprotein reductase] + 2 H2O + H(+). It catalyses the reaction 32-oxoeburicol + reduced [NADPH--hemoprotein reductase] + O2 = 14-demethyleburicol + formate + oxidized [NADPH--hemoprotein reductase] + H2O + 2 H(+). The protein operates within steroid metabolism; ergosterol biosynthesis. Its function is as follows. Together with cyp51A and cyp51C, encodes the sterol 14alpha-demethylase that plays a critical role in the third module of ergosterol biosynthesis pathway, being ergosterol the major sterol component in fungal membranes that participates in a variety of functions. Essential for ascospore production. The third module or late pathway involves the ergosterol synthesis itself through consecutive reactions that mainly occur in the endoplasmic reticulum (ER) membrane. In filamentous fungi, during the initial step of this module, lanosterol (lanosta-8,24-dien-3beta-ol) can be metabolized to eburicol. Sterol 14alpha-demethylase catalyzes the three-step oxidative removal of the 14alpha-methyl group (C-32) of both these sterols in the form of formate, and converts eburicol and lanosterol to 14-demethyleburicol (4,4,24-trimethylergosta-8,14,24(28)-trienol) and 4,4-dimethyl-5alpha-cholesta-8,14,24-trien-3beta-ol, respectively, which are further metabolized by other enzymes in the pathway to ergosterol. Can also use substrates not intrinsic to fungi, such as 24,25-dihydrolanosterol (DHL), producing 4,4'-dimethyl-8,14-cholestadien-3-beta-ol, but at lower rates than the endogenous substrates. This is Sterol 14-alpha demethylase CYP51A from Gibberella zeae (strain ATCC MYA-4620 / CBS 123657 / FGSC 9075 / NRRL 31084 / PH-1) (Wheat head blight fungus).